The primary structure comprises 265 residues: 4-hydroxy-tetrahydrodipicolinate reductase (265 aa).

Gly9–Met14 is a binding site for NAD(+). Position 37 (Lys37) interacts with NADP(+). Residues Gly99–Thr101 and Ala125–Phe128 each bind NAD(+). The active-site Proton donor/acceptor is His155. His156 lines the (S)-2,3,4,5-tetrahydrodipicolinate pocket. The active-site Proton donor is the Lys159. Gly165–Thr166 contacts (S)-2,3,4,5-tetrahydrodipicolinate. Basic and acidic residues predominate over residues Arg178–Glu190. Residues Arg178–Met200 form a disordered region.

It belongs to the DapB family.

Its subcellular location is the cytoplasm. It carries out the reaction (S)-2,3,4,5-tetrahydrodipicolinate + NAD(+) + H2O = (2S,4S)-4-hydroxy-2,3,4,5-tetrahydrodipicolinate + NADH + H(+). The catalysed reaction is (S)-2,3,4,5-tetrahydrodipicolinate + NADP(+) + H2O = (2S,4S)-4-hydroxy-2,3,4,5-tetrahydrodipicolinate + NADPH + H(+). It participates in amino-acid biosynthesis; L-lysine biosynthesis via DAP pathway; (S)-tetrahydrodipicolinate from L-aspartate: step 4/4. Functionally, catalyzes the conversion of 4-hydroxy-tetrahydrodipicolinate (HTPA) to tetrahydrodipicolinate. The sequence is that of 4-hydroxy-tetrahydrodipicolinate reductase from Oceanobacillus iheyensis (strain DSM 14371 / CIP 107618 / JCM 11309 / KCTC 3954 / HTE831).